A 335-amino-acid chain; its full sequence is Nucleoid-associated protein YejK (335 aa).

This sequence belongs to the YejK family.

The protein resides in the cytoplasm. It localises to the nucleoid. This chain is Nucleoid-associated protein YejK, found in Shigella dysenteriae serotype 1 (strain Sd197).